The primary structure comprises 95 residues: UPF0132 membrane protein AF_0736 (95 aa).

The next 3 helical transmembrane spans lie at 2 to 22, 32 to 52, and 55 to 75; these read CYTL…SPFV, TFST…GALL, and VVMA…SRGE.

The protein belongs to the UPF0132 family.

It localises to the cell membrane. The polypeptide is UPF0132 membrane protein AF_0736 (Archaeoglobus fulgidus (strain ATCC 49558 / DSM 4304 / JCM 9628 / NBRC 100126 / VC-16)).